A 2025-amino-acid chain; its full sequence is E3 ubiquitin-protein ligase TTC3 (2025 aa).

The segment at 1–230 (MDNFAEGDFT…TQSCMDCIEE (230 aa)) is interaction with POLG. TPR repeat units lie at residues 231–264 (GELMKMKGNEEFSKERFDIAIIYYTRAIEYRPEN) and 266–298 (LLYGNRALCFLRTGQFRNALGDGKRATILKNTW). Serine 378 carries the post-translational modification Phosphoserine; by PKB/AKT2. The disordered stretch occupies residues 423-458 (DCHPEFSPPSSQPPKHKGKQKSRNNESEKFSSSSPL). TPR repeat units lie at residues 536–572 (VLVVYGLAISLLGIGQPEELSEAENQFKRIIEHYPSE) and 576–609 (CLAYCGIGKVYLKKNRFLEALNHFEKARTLIYRL). The interval 786-805 (ERMEEDLRESNPPKNEEQKE) is disordered. A compositionally biased stretch (basic and acidic residues) spans 793 to 805 (RESNPPKNEEQKE). Serine 1009 is subject to Phosphoserine. 4 disordered regions span residues 1012-1068 (APFS…GPFA), 1215-1295 (KPDV…SCNS), 1773-1842 (DPSV…SPKK), and 1894-1944 (ILDE…QKAE). A compositionally biased stretch (basic residues) spans 1019–1029 (VKNKSKKKKPK). The span at 1038–1052 (SGTTSVTSNNEIITS) shows a compositional bias: polar residues. Serine 1061 carries the post-translational modification Phosphoserine. Residues 1894-1912 (ILDEQKKKKPNPGKDKRTY) show a composition bias toward basic and acidic residues. Residues 1913–1928 (EPSSATPVTRSSQGSP) are compositionally biased toward polar residues. An RING-type zinc finger spans residues 1957–1997 (CEICHEVFKSKNVRVLKCGHKYHKGCFKQWLKGQSACPACQ). The segment at 2004–2025 (EESPSGRGWPSQNQELPSCSSR) is disordered. The span at 2013–2025 (PSQNQELPSCSSR) shows a compositional bias: polar residues.

Interacts (when phosphorylated on Ser-378) with AKT1, AKT2 and AKT3 (when phosphorylated). Interacts with CIT. Interacts with POLG. Interacts with HSP70. Interacts with SMURF2. In terms of processing, phosphorylation on Ser-378 by Akt is required for ubiquitin ligase activity. Proteolytically cleaved into differently sized N- and C-terminal fragments. Found in all tissues examined.

The protein localises to the nucleus. It is found in the cytoplasm. It localises to the golgi apparatus. It carries out the reaction S-ubiquitinyl-[E2 ubiquitin-conjugating enzyme]-L-cysteine + [acceptor protein]-L-lysine = [E2 ubiquitin-conjugating enzyme]-L-cysteine + N(6)-ubiquitinyl-[acceptor protein]-L-lysine.. The protein operates within protein modification; protein ubiquitination. In terms of biological role, E3 ubiquitin-protein ligase which catalyzes the formation of 'Lys-48'-polyubiquitin chains. Mediates the ubiquitination and subsequent degradation of phosphorylated Akt (AKT1, AKT2 and AKT3) in the nucleus. Acts as a terminal regulator of Akt signaling after activation; its phosphorylation by Akt, which is a prerequisite for ubiquitin ligase activity, suggests the existence of a regulation mechanism required to control Akt levels after activation. Positively regulates TGFB1-induced epithelial-mesenchymal transition and myofibroblast differentiation by mediating the ubiquitination and subsequent degradation of SMURF2. Regulates neuronal differentiation by regulating actin remodeling and Golgi organization via a signaling cascade involving RHOA, CIT and ROCK. Inhibits cell proliferation. In Homo sapiens (Human), this protein is E3 ubiquitin-protein ligase TTC3 (TTC3).